Consider the following 142-residue polypeptide: Large ribosomal subunit protein uL13 (142 aa).

The protein belongs to the universal ribosomal protein uL13 family. In terms of assembly, part of the 50S ribosomal subunit.

This protein is one of the early assembly proteins of the 50S ribosomal subunit, although it is not seen to bind rRNA by itself. It is important during the early stages of 50S assembly. The polypeptide is Large ribosomal subunit protein uL13 (Histophilus somni (strain 2336) (Haemophilus somnus)).